The chain runs to 534 residues: Kelch repeat and BTB domain-containing protein 4 (534 aa).

The interval 1 to 25 (MKGGNADSWQREKLASMESPEEPGA) is disordered. Residues 61–128 (ADVTISVEGR…IYHGTVKLRA (68 aa)) form the BTB domain. The region spanning 163–255 (CLQVMWLADR…SLKEIGENVH (93 aa)) is the BACK domain. 5 Kelch repeats span residues 255–301 (HIYL…KHGG), 302–344 (DLYV…SVPG), 347–394 (AIYS…NLNG), 396–446 (IYLL…VHKD), and 448–497 (VFIV…VFRD).

In terms of assembly, component of the BCR(KBTBD4) E3 ubiquitin ligase complex, at least composed of CUL3, KBTBD4 and RBX1.

Its function is as follows. Substrate-specific adapter of a BCR (BTB-CUL3-RBX1) E3 ubiquitin ligase complex which targets CoREST corepressor complex components RCOR1, KDM1A/LSD1 and HDAC2 for proteasomal degradation. RCOR1 is likely to be the primary target while degradation of KDM1A and HDAC2 is likely due to their association with RCOR1. Also targets RCOR3, MIER2 and MIER3 for proteasomal degradation as well as associated proteins ZNF217 and RREB1. Degradation is dependent on the presence of an ELM2 domain in the target proteins. This chain is Kelch repeat and BTB domain-containing protein 4 (KBTBD4), found in Homo sapiens (Human).